We begin with the raw amino-acid sequence, 347 residues long: NADH-ubiquinone oxidoreductase chain 2 (347 aa).

11 helical membrane-spanning segments follow: residues 3–23, 25–45, 59–79, 96–116, 122–142, 149–169, 178–198, 201–221, 237–257, 274–294, and 326–346; these read PLIF…VMTT, HWVM…PILM, YFLT…INLT, IIMT…FWVP, VQLS…MSIL, INLD…GWGG, ILAY…VYNP, ALLN…MLMV, MPLL…LPPL, DSMI…YFYM, and LSPL…LALL.

It belongs to the complex I subunit 2 family. Core subunit of respiratory chain NADH dehydrogenase (Complex I) which is composed of 45 different subunits. Interacts with TMEM242.

The protein localises to the mitochondrion inner membrane. It carries out the reaction a ubiquinone + NADH + 5 H(+)(in) = a ubiquinol + NAD(+) + 4 H(+)(out). Core subunit of the mitochondrial membrane respiratory chain NADH dehydrogenase (Complex I) which catalyzes electron transfer from NADH through the respiratory chain, using ubiquinone as an electron acceptor. Essential for the catalytic activity and assembly of complex I. The polypeptide is NADH-ubiquinone oxidoreductase chain 2 (Nyctimene aello (Broad-striped tube-nosed fruit bat)).